The primary structure comprises 300 residues: 4-hydroxybenzoate octaprenyltransferase (300 aa).

8 consecutive transmembrane segments (helical) span residues 32-52 (IGTY…SEGA), 55-75 (LKNL…GCVI), 108-128 (LFGI…ALTI), 149-169 (YLPQ…AFAA), 178-198 (AWLL…MYAM), 222-242 (AAVA…GAQH), 246-266 (VYYQ…QHLI), and 278-298 (FLNN…EFLF).

It belongs to the UbiA prenyltransferase family. The cofactor is Mg(2+).

It is found in the cell inner membrane. The enzyme catalyses all-trans-octaprenyl diphosphate + 4-hydroxybenzoate = 4-hydroxy-3-(all-trans-octaprenyl)benzoate + diphosphate. Its pathway is cofactor biosynthesis; ubiquinone biosynthesis. Functionally, catalyzes the prenylation of para-hydroxybenzoate (PHB) with an all-trans polyprenyl group. Mediates the second step in the final reaction sequence of ubiquinone-8 (UQ-8) biosynthesis, which is the condensation of the polyisoprenoid side chain with PHB, generating the first membrane-bound Q intermediate 3-octaprenyl-4-hydroxybenzoate. This Hahella chejuensis (strain KCTC 2396) protein is 4-hydroxybenzoate octaprenyltransferase.